The following is a 361-amino-acid chain: tRNA 2-selenouridine synthase (361 aa).

Residues 11-134 (LIADTPLIDV…LRQTAIQATW (124 aa)) form the Rhodanese domain. The active-site S-selanylcysteine intermediate is Cys-94.

The protein belongs to the SelU family. As to quaternary structure, monomer.

It catalyses the reaction 5-methylaminomethyl-2-thiouridine(34) in tRNA + selenophosphate + (2E)-geranyl diphosphate + H2O + H(+) = 5-methylaminomethyl-2-selenouridine(34) in tRNA + (2E)-thiogeraniol + phosphate + diphosphate. The enzyme catalyses 5-methylaminomethyl-2-thiouridine(34) in tRNA + (2E)-geranyl diphosphate = 5-methylaminomethyl-S-(2E)-geranyl-thiouridine(34) in tRNA + diphosphate. The catalysed reaction is 5-methylaminomethyl-S-(2E)-geranyl-thiouridine(34) in tRNA + selenophosphate + H(+) = 5-methylaminomethyl-2-(Se-phospho)selenouridine(34) in tRNA + (2E)-thiogeraniol. It carries out the reaction 5-methylaminomethyl-2-(Se-phospho)selenouridine(34) in tRNA + H2O = 5-methylaminomethyl-2-selenouridine(34) in tRNA + phosphate. Involved in the post-transcriptional modification of the uridine at the wobble position (U34) of tRNA(Lys), tRNA(Glu) and tRNA(Gln). Catalyzes the conversion of 2-thiouridine (S2U-RNA) to 2-selenouridine (Se2U-RNA). Acts in a two-step process involving geranylation of 2-thiouridine (S2U) to S-geranyl-2-thiouridine (geS2U) and subsequent selenation of the latter derivative to 2-selenouridine (Se2U) in the tRNA chain. This Salmonella arizonae (strain ATCC BAA-731 / CDC346-86 / RSK2980) protein is tRNA 2-selenouridine synthase.